The chain runs to 601 residues: MATIEEIAHQIIEQQMGEIVTEQQTGQKIQIVTALDHNTQGKQFILTNHDGSTPSKVILARQDSTPGKVFLTTPDAAGVNQLFFTTPDLSAQHLQLLTDNSSPDQGPNKVFDLCVVCGDKASGRHYGAVTCEGCKGFFKRSIRKNLVYSCRGSKDCIINKHHRNRCQYCRLQRCIAFGMKQDSVQCERKPIEVSREKSSNCAASTEKIYIRKDLRSPLTATPTFVTDSESTRSTGLLDSGMFVNIHPSGVKTESTVLMTSDKAESCQGDLSTLASVVTSLANLGKTKDLSQNSNEMSMIESLSNDDTSLCEFQEMHTNGDVSRAFDTLAKALNPGESTACQSSVAGMEGSVHLITGDSSINYTEKEGPLLSDSHVAFRLTMPSPMPEYLNVHYIGESASRLLFLSMHWALSIPSFQALGQENSISLVKAYWNELFTLGLAQCWQVMNVATILATFVNCLHNSLQQDKMSTERRKLLMEHIFKLQEFCNSMVKLCIDGYEYAYLKAIVLFSPDHPGLENMEQIEKFQEKAYVEFQDYITKTYPDDTYRLSRLLLRLPALRLMNATITEELFFKGLIGNIRIDSVIPHILKMEPGQYSKTSSL.

The segment at 1–179 (MATIEEIAHQ…RLQRCIAFGM (179 aa)) is required for interaction with KAT2B. A DNA-binding region (nuclear receptor) is located at residues 111 to 186 (FDLCVVCGDK…FGMKQDSVQC (76 aa)). NR C4-type zinc fingers lie at residues 114 to 134 (CVVCGDKASGRHYGAVTCEGC) and 150 to 169 (CRGSKDCIINKHHRNRCQYC). Ser-198 and Ser-216 each carry phosphoserine. Position 221 is a phosphothreonine (Thr-221). Position 223 is a phosphothreonine; by MAPK1 (Thr-223). Lys-251 participates in a covalent cross-link: Glycyl lysine isopeptide (Lys-Gly) (interchain with G-Cter in SUMO); alternate. Residue Lys-251 forms a Glycyl lysine isopeptide (Lys-Gly) (interchain with G-Cter in SUMO2); alternate linkage. An NR LBD domain is found at 349–591 (GSVHLITGDS…SVIPHILKME (243 aa)). At Ser-582 the chain carries Phosphoserine; by PKC. The segment at 585–601 (PHILKMEPGQYSKTSSL) is required for interaction with NRIP1. A Glycyl lysine isopeptide (Lys-Gly) (interchain with G-Cter in SUMO2) cross-link involves residue Lys-589.

Belongs to the nuclear hormone receptor family. NR2 subfamily. Homodimer. Heterodimer; with NR2C2 which is required for chromatin remodeling and for binding to promoter regions such as globin DR1 repeats. Interacts with ESR1; the interaction prevents homodimerization of ESR1 and suppresses its transcriptional activity and cell growth. Interacts with NRIP1 (via its LXXLL motifs); the interaction provides corepressor activity. Interacts with HDAC3 (via the DNA-binding domain); the interaction recruits phosphorylated NR2C1 to PML bodies for sumoylation. Interacts with HDAC4 (via the DNA-binding domain). Interacts with PIAS1; the interaction is required for sumoylation of NR2C1. Interacts with UBE2I; the interaction is required for sumoylation of NR2C1. Interacts with KAT2B; the interaction acts as a corepressor of gene expression. In terms of processing, sumoylation requires both PIAS1 and UBE2I. Sumoylation appears to dissociate NR2C1 from the PML nuclear bodies. Enhances the interaction with NRIP1 but inhibits interaction with KAT2B. In proliferating cells, stimulation by all-trans retinoic acid, activation of MAPK1-mediated phosphorylation and recruitment to PML bodies with subsequent sumoylation, suppresses OCT4 expression. Phosphorylated on several serine and threonine residues. Phosphorylation on Thr-223, stimulated by all-trans retinoic acid (atRA) mediates PML location and sumoylation in proliferating cells which then modulates its association with effector molecules, KAT2B and NRIP1. Phosphorylation on Ser-582 by PKC is important for protein stability and function as activator of RARB.

Its subcellular location is the nucleus. It is found in the PML body. Functionally, orphan nuclear receptor. Binds the IR7 element in the promoter of its own gene in an autoregulatory negative feedback mechanism. Primarily repressor of a broad range of genes including ESR1 and RARB. Together with NR2C2, forms the core of the DRED (direct repeat erythroid-definitive) complex that represses embryonic and fetal globin transcription. Binds to hormone response elements (HREs) consisting of two 5'-AGGTCA-3' half site direct repeat consensus sequences. Also activator of OCT4 gene expression. Plays a fundamental role in early embryogenesis and regulates embryonic stem cell proliferation and differentiation. Mediator of retinoic acid-regulated preadipocyte proliferation. This chain is Nuclear receptor subfamily 2 group C member 1 (NR2C1), found in Pongo abelii (Sumatran orangutan).